The primary structure comprises 196 residues: Peptide methionine sulfoxide reductase (196 aa).

A compositionally biased stretch (polar residues) spans 1–14 (MEGNNSSSKSTTNP). Residues 1 to 23 (MEGNNSSSKSTTNPALDPDLDSP) form a disordered region.

It belongs to the MsrA Met sulfoxide reductase family.

It catalyses the reaction L-methionyl-[protein] + [thioredoxin]-disulfide + H2O = L-methionyl-(S)-S-oxide-[protein] + [thioredoxin]-dithiol. The enzyme catalyses [thioredoxin]-disulfide + L-methionine + H2O = L-methionine (S)-S-oxide + [thioredoxin]-dithiol. In terms of biological role, has an important function as a repair enzyme for proteins that have been inactivated by oxidation. Catalyzes the reversible oxidation-reduction of methionine sulfoxide in proteins to methionine. The polypeptide is Peptide methionine sulfoxide reductase (E4) (Solanum lycopersicum (Tomato)).